The chain runs to 623 residues: MDDQNKNLILATGLSFLVIMVWFFLFPPPEAVTEGEPTVATQQTAVAPSATPDAPTTAVPPDADLPETQRVVIDTPRLQGSISMLGGRLDDLSLKSYHETLDPQSQIVRLLSPVGQPNAYYALYGWTPAGALGYEDVPGANTTWTQVGSGALGVDQPVTLQWDNGKGLVFTRTISVDDHYMFSVAQTVENNSGQAVQLAPYGIVARHGKPLNLQNFFVLHEGVVGRADGKLTETKYDKVAELPQVAREGAQAEVIDAQQDGWIGFTDKYWMTTLIPQQGQPFTSVTKYVPGADIYQAETREQLVTVAPGATAEVSSRLFAGAKEWETIRAYQNEGATEPTEGAEPIPGFIDSIDWGWFFFLTKPIFTVLHWLNHMIGNMGLAIIALTFLLKALVLPLAYKSYVSMARMKELQPELEALRERAGDDKMLMQREMMRLYKEKQVNPAAGCLPILIQIPIFFSLYKVIFVTIELRHAPFFGWLKDLSAPDPSSIFNFFGLAPWAAPTPGTTMALIFIGALPILLGVSMWLQQKLNPAPGDKAQAMIFAWMPWVFMFMLGHFASGLVLYWIVNNLITFTQQYVIMRSHGHHPDIFGNIKASFSRKPAAQPAGKAANDGAAPAKKRKP.

5 helical membrane-spanning segments follow: residues 8-28 (LILA…LFPP), 379-399 (MGLA…PLAY), 449-469 (LPIL…FVTI), 507-527 (TTMA…SMWL), and 543-563 (IFAW…SGLV). Residues 601–617 (KPAAQPAGKAANDGAAP) show a composition bias toward low complexity. Residues 601 to 623 (KPAAQPAGKAANDGAAPAKKRKP) form a disordered region.

Belongs to the OXA1/ALB3/YidC family. Type 1 subfamily. As to quaternary structure, interacts with the Sec translocase complex via SecD. Specifically interacts with transmembrane segments of nascent integral membrane proteins during membrane integration.

The protein localises to the cell inner membrane. Its function is as follows. Required for the insertion and/or proper folding and/or complex formation of integral membrane proteins into the membrane. Involved in integration of membrane proteins that insert both dependently and independently of the Sec translocase complex, as well as at least some lipoproteins. Aids folding of multispanning membrane proteins. This Cereibacter sphaeroides (strain ATCC 17023 / DSM 158 / JCM 6121 / CCUG 31486 / LMG 2827 / NBRC 12203 / NCIMB 8253 / ATH 2.4.1.) (Rhodobacter sphaeroides) protein is Membrane protein insertase YidC.